Consider the following 269-residue polypeptide: Cleavage and polyadenylation specificity factor subunit 4 (269 aa).

C3H1-type zinc fingers lie at residues 35–61 (KSGA…RHIS), 62–89 (GEKT…HEYD), 90–117 (MTKM…HIDP), 118–142 (ESKI…RHRH), and 143–169 (TRRV…HPRF). Residues 173–199 (MGTTEQPPLPQQTQPPAKQSNNPPLQR) are disordered. Phosphoserine is present on residues S200, S202, and S212. Residues 243 to 260 (VTCYKCGEKGHYANRCTK) form a CCHC-type zinc finger. S267 carries the post-translational modification Phosphoserine.

It belongs to the CPSF4/YTH1 family. Component of the cleavage and polyadenylation specificity factor (CPSF) complex, composed of CPSF1, CPSF2, CPSF3, CPSF4 and FIP1L1. Interacts with FIP1L1. In terms of assembly, (Microbial infection) Interacts with influenza A virus NS1 blocks processing of pre-mRNAs, thereby preventing nuclear export of host cell mRNAs.

The protein resides in the nucleus. Functionally, component of the cleavage and polyadenylation specificity factor (CPSF) complex that play a key role in pre-mRNA 3'-end formation, recognizing the AAUAAA signal sequence and interacting with poly(A) polymerase and other factors to bring about cleavage and poly(A) addition. CPSF4 binds RNA polymers with a preference for poly(U). The protein is Cleavage and polyadenylation specificity factor subunit 4 (CPSF4) of Homo sapiens (Human).